Consider the following 245-residue polypeptide: 3-deoxy-manno-octulosonate cytidylyltransferase (245 aa).

This sequence belongs to the KdsB family.

The protein resides in the cytoplasm. It carries out the reaction 3-deoxy-alpha-D-manno-oct-2-ulosonate + CTP = CMP-3-deoxy-beta-D-manno-octulosonate + diphosphate. The protein operates within nucleotide-sugar biosynthesis; CMP-3-deoxy-D-manno-octulosonate biosynthesis; CMP-3-deoxy-D-manno-octulosonate from 3-deoxy-D-manno-octulosonate and CTP: step 1/1. It functions in the pathway bacterial outer membrane biogenesis; lipopolysaccharide biosynthesis. Its function is as follows. Activates KDO (a required 8-carbon sugar) for incorporation into bacterial lipopolysaccharide in Gram-negative bacteria. This is 3-deoxy-manno-octulosonate cytidylyltransferase from Rhodopseudomonas palustris (strain TIE-1).